Reading from the N-terminus, the 124-residue chain is Ribonuclease pancreatic (124 aa).

Basic and acidic residues predominate over residues 1–13 (KETAAAKFERQHM). The interval 1–25 (KETAAAKFERQHMDSSTSSASSSNY) is disordered. Lys7 and Arg10 together coordinate substrate. The Proton acceptor role is filled by His12. Cystine bridges form between Cys26-Cys84, Cys40-Cys95, Cys58-Cys110, and Cys65-Cys72. Substrate is bound by residues 41–45 (KPVNT), Lys66, and Arg85. His119 functions as the Proton donor in the catalytic mechanism.

Belongs to the pancreatic ribonuclease family. Monomer. Interacts with and forms tight 1:1 complexes with RNH1. Dimerization of two such complexes may occur. Interaction with RNH1 inhibits this protein. In terms of tissue distribution, pancreas.

It is found in the secreted. The enzyme catalyses an [RNA] containing cytidine + H2O = an [RNA]-3'-cytidine-3'-phosphate + a 5'-hydroxy-ribonucleotide-3'-[RNA].. It catalyses the reaction an [RNA] containing uridine + H2O = an [RNA]-3'-uridine-3'-phosphate + a 5'-hydroxy-ribonucleotide-3'-[RNA].. Functionally, endonuclease that catalyzes the cleavage of RNA on the 3' side of pyrimidine nucleotides. Acts on single-stranded and double-stranded RNA. In Tragelaphus oryx (Eland), this protein is Ribonuclease pancreatic (RNASE1).